Consider the following 210-residue polypeptide: HTH-type transcriptional repressor FabR (210 aa).

The 61-residue stretch at 10 to 70 (KTRRSLVEAA…TMVDESGLML (61 aa)) folds into the HTH tetR-type domain. The H-T-H motif DNA-binding region spans 33-52 (SLREVAREAGIAPTSFYRHF).

In terms of assembly, homodimer.

The protein resides in the cytoplasm. Represses the transcription of fabB, involved in unsaturated fatty acid (UFA) biosynthesis. By controlling UFA production, FabR directly influences the physical properties of the membrane bilayer. The protein is HTH-type transcriptional repressor FabR of Klebsiella pneumoniae subsp. pneumoniae (strain ATCC 700721 / MGH 78578).